The primary structure comprises 433 residues: D-amino acid dehydrogenase (433 aa).

3-17 (IVVLGAGVLGVTSAW) is an FAD binding site.

This sequence belongs to the DadA oxidoreductase family. The cofactor is FAD.

It carries out the reaction a D-alpha-amino acid + A + H2O = a 2-oxocarboxylate + AH2 + NH4(+). Its pathway is amino-acid degradation; D-alanine degradation; NH(3) and pyruvate from D-alanine: step 1/1. Oxidative deamination of D-amino acids. The sequence is that of D-amino acid dehydrogenase from Paracoccus denitrificans (strain Pd 1222).